The primary structure comprises 443 residues: Putative transporter AmpG 1 (443 aa).

A run of 13 helical transmembrane segments spans residues 5-25, 42-62, 78-98, 104-124, 143-163, 171-191, 230-250, 254-274, 299-319, 324-344, 354-374, 393-413, and 415-435; these read SHIYIIWLFGFISGFNVMITG, IGMLSFITLPYSINFLLAPVF, LSWICLTSTTLISLIFILSFL, LVLLSFIAFIISFFSAAQDTI, GIYILGYRVGMLLASSGAIYL, AIYKIFAGVIFVYLILLILVA, FNYFKNFISAYLLKIFSGFYF, DINLAYYIILILIFLVLYRLP, VCKFCGVMGAIIGGLIGGIIM, ILYSILLFGIIHALSHIFFIL, ILFITIGVESITGGMTMTAYI, LSSMMGISRSIFPIISGYMVV, and FGWQNFFLFTTIITIPSLLIL.

This sequence belongs to the major facilitator superfamily.

The protein localises to the cell inner membrane. This is Putative transporter AmpG 1 (ampG1) from Rickettsia prowazekii (strain Madrid E).